We begin with the raw amino-acid sequence, 858 residues long: DNA mismatch repair protein MutS (858 aa).

Residue 602–609 coordinates ATP; the sequence is GPNMSGKS.

The protein belongs to the DNA mismatch repair MutS family.

Its function is as follows. This protein is involved in the repair of mismatches in DNA. It is possible that it carries out the mismatch recognition step. This protein has a weak ATPase activity. Overexpression of mutSL partially suppresses the high spontaneous mutation frequency of a ytkD/mutM/mutY triple disruption which lacks the system required to prevent damage by oxidized guanine (8-oxo-dGTP). This suggests that MutSL also functions to repair mismatches due to oxidative stress in both growing and stationary phase cells. In Bacillus subtilis (strain 168), this protein is DNA mismatch repair protein MutS.